A 336-amino-acid polypeptide reads, in one-letter code: Probable allantoicase (336 aa).

This sequence belongs to the allantoicase family.

The catalysed reaction is allantoate + H2O = (S)-ureidoglycolate + urea. Its pathway is nitrogen metabolism; (S)-allantoin degradation; (S)-ureidoglycolate from allantoate (aminidohydrolase route): step 1/1. The sequence is that of Probable allantoicase from Acinetobacter baumannii (strain ATCC 17978 / DSM 105126 / CIP 53.77 / LMG 1025 / NCDC KC755 / 5377).